Consider the following 443-residue polypeptide: Protein SCAR (443 aa).

The tract at residues 1 to 96 (MVLITRYLPS…DYHRNTSIDT (96 aa)) is interaction with brk1 and abiA. Positions 166-201 (VAEQQKLHEEARQRKRERREARLKKKGEKNEVEVKK) form a coiled coil. Disordered stretches follow at residues 176–197 (ARQRKRERREARLKKKGEKNEV) and 220–386 (INIE…RSDL). The segment covering 178–192 (QRKRERREARLKKKG) has biased composition (basic residues). Positions 221–252 (NIESPHTSSPQIQHQSNNTATPQHTTQHFGTN) are enriched in polar residues. Low complexity-rich tracts occupy residues 263–277 (SQSSPSQQHSPINSY) and 285–305 (NTSTPSPSSSFQGRPPSTGFN). Pro residues predominate over residues 306-323 (TPPPPMSNNNNMPPPPPM). The segment covering 324 to 338 (QQNGGAANNRLSVHN) has biased composition (polar residues). Positions 346 to 365 (PAPPPPPPPPSAPAPPPPPM) are enriched in pro residues. The region spanning 382–399 (ARSDLLSSIMQGMALKPA) is the WH2 domain.

It belongs to the SCAR/WAVE family. As to quaternary structure, part of a Scar/WAVE complex containing brk1, scrA, abiA, pirA and napA. Interacts with brk1 and abiA.

It is found in the cytoplasm. The protein resides in the cytoskeleton. It localises to the cell projection. The protein localises to the pseudopodium tip. Its subcellular location is the filopodium tip. Its function is as follows. Involved in regulation of actin and microtubule organization. Regulates phagocytosis and macropinocytosis. The protein is Protein SCAR (scrA) of Dictyostelium discoideum (Social amoeba).